The chain runs to 103 residues: UPF0473 protein SGO_2040 (103 aa).

This sequence belongs to the UPF0473 family.

The polypeptide is UPF0473 protein SGO_2040 (Streptococcus gordonii (strain Challis / ATCC 35105 / BCRC 15272 / CH1 / DL1 / V288)).